We begin with the raw amino-acid sequence, 250 residues long: NAD-dependent protein deacetylase 2 (250 aa).

The Deacetylase sirtuin-type domain occupies 4-250; the sequence is MDSKNLFKKA…LRNIWNLIKS (247 aa). 8 residues coordinate NAD(+): alanine 29, threonine 33, phenylalanine 40, arginine 41, glutamine 107, isoleucine 109, aspartate 110, and histidine 125. Phenylalanine 40 is a binding site for nicotinamide. Positions 109 and 110 each coordinate nicotinamide. The active-site Proton acceptor is the histidine 125. Residues cysteine 133, cysteine 136, cysteine 158, and cysteine 161 each contribute to the Zn(2+) site. Residues serine 198, serine 199, and asparagine 219 each contribute to the NAD(+) site.

Belongs to the sirtuin family. Class U subfamily. The cofactor is Zn(2+).

It localises to the cytoplasm. It carries out the reaction N(6)-acetyl-L-lysyl-[protein] + NAD(+) + H2O = 2''-O-acetyl-ADP-D-ribose + nicotinamide + L-lysyl-[protein]. Its function is as follows. NAD-dependent protein deacetylase which modulates the activities of several enzymes which are inactive in their acetylated form. The polypeptide is NAD-dependent protein deacetylase 2 (Caldanaerobacter subterraneus subsp. tengcongensis (strain DSM 15242 / JCM 11007 / NBRC 100824 / MB4) (Thermoanaerobacter tengcongensis)).